The following is a 43-amino-acid chain: uncharacterized protein (43 aa).

Residues 1–37 (MIIKNNNNNNNNNNNNNNNNNNNNNNNNNNNNNNNNN) show a composition bias toward low complexity. The interval 1–43 (MIIKNNNNNNNNNNNNNNNNNNNNNNNNNNNNNNNNNIEIIIK) is disordered.

This is an uncharacterized protein from Dictyostelium discoideum (Social amoeba).